Consider the following 415-residue polypeptide: Translation initiation factor 2 subunit gamma (415 aa).

One can recognise a tr-type G domain in the interval 7–206 (QPEVNIGVVG…GIEEYIKTPY (200 aa)). A G1 region spans residues 16–23 (GHVDHGKT). Positions 19, 23, 44, and 46 each coordinate Mg(2+). Position 19-24 (19-24 (DHGKTT)) interacts with GTP. A G2 region spans residues 44-48 (GMTIK). Residues C59, C62, C74, and C77 each contribute to the Zn(2+) site. The G3 stretch occupies residues 93 to 96 (DAPG). Residues 149-152 (NKVD) and 184-186 (SAL) contribute to the GTP site. The segment at 149–152 (NKVD) is G4. Positions 184–186 (SAL) are G5.

This sequence belongs to the TRAFAC class translation factor GTPase superfamily. Classic translation factor GTPase family. EIF2G subfamily. As to quaternary structure, heterotrimer composed of an alpha, a beta and a gamma chain. Mg(2+) serves as cofactor.

The enzyme catalyses GTP + H2O = GDP + phosphate + H(+). In terms of biological role, eIF-2 functions in the early steps of protein synthesis by forming a ternary complex with GTP and initiator tRNA. This chain is Translation initiation factor 2 subunit gamma, found in Saccharolobus solfataricus (strain ATCC 35092 / DSM 1617 / JCM 11322 / P2) (Sulfolobus solfataricus).